The following is a 140-amino-acid chain: Large ribosomal subunit protein uL11 (140 aa).

Belongs to the universal ribosomal protein uL11 family. As to quaternary structure, part of the ribosomal stalk of the 50S ribosomal subunit. Interacts with L10 and the large rRNA to form the base of the stalk. L10 forms an elongated spine to which L12 dimers bind in a sequential fashion forming a multimeric L10(L12)X complex. One or more lysine residues are methylated.

In terms of biological role, forms part of the ribosomal stalk which helps the ribosome interact with GTP-bound translation factors. This chain is Large ribosomal subunit protein uL11, found in Karelsulcia muelleri (strain GWSS) (Sulcia muelleri).